The chain runs to 337 residues: DNA-directed RNA polymerase subunit alpha (337 aa).

The segment at 1–231 is alpha N-terminal domain (alpha-NTD); it reads MRNITTSAYT…KQLSVFDKIT (231 aa). Positions 247–337 are alpha C-terminal domain (alpha-CTD); the sequence is ENTKLLQNIT…IAELKAQNEG (91 aa).

Belongs to the RNA polymerase alpha chain family. Homodimer. The RNAP catalytic core consists of 2 alpha, 1 beta, 1 beta' and 1 omega subunit. When a sigma factor is associated with the core the holoenzyme is formed, which can initiate transcription.

It catalyses the reaction RNA(n) + a ribonucleoside 5'-triphosphate = RNA(n+1) + diphosphate. Functionally, DNA-dependent RNA polymerase catalyzes the transcription of DNA into RNA using the four ribonucleoside triphosphates as substrates. This Campylobacter jejuni subsp. jejuni serotype O:2 (strain ATCC 700819 / NCTC 11168) protein is DNA-directed RNA polymerase subunit alpha.